Consider the following 505-residue polypeptide: Endoglucanase 5 (505 aa).

A signal peptide spans methionine 1 to serine 31. Residues alanine 32–leucine 334 form a catalytic region. Residues histidine 64, tryptophan 68–phenylalanine 69, tyrosine 95, and histidine 130 contribute to the substrate site. Glutamate 168 serves as the catalytic Proton donor. Residue tyrosine 230 coordinates substrate. Residue glutamate 256 is the Nucleophile of the active site. Substrate is bound by residues alanine 262 to serine 263, tryptophan 290, and lysine 295 to glutamate 297. The disordered stretch occupies residues alanine 332–glycine 355. The tract at residues glycine 335–glycine 352 is linker. The segment covering threonine 339–glycine 355 has biased composition (low complexity). The 153-residue stretch at threonine 353–proline 505 folds into the CBM3 domain.

The protein belongs to the glycosyl hydrolase 5 (cellulase A) family.

It localises to the secreted. It catalyses the reaction Endohydrolysis of (1-&gt;4)-beta-D-glucosidic linkages in cellulose, lichenin and cereal beta-D-glucans.. Functionally, endoglucanase with some exoglucanase activity. The polypeptide is Endoglucanase 5 (celV) (Pectobacterium carotovorum subsp. carotovorum (Erwinia carotovora subsp. carotovora)).